The sequence spans 559 residues: Pentatricopeptide repeat-containing protein At1g08610 (559 aa).

PPR repeat units follow at residues 103-137, 138-172, 173-207, 208-242, 243-277, 278-312, 313-347, 348-382, 383-417, 418-452, 453-487, 488-522, and 523-557; these read DEET…NQVP, HFPS…GGVP, DTIT…GSPP, DVIT…GCPP, FMIT…GCYP, DIVT…GLEL, NTVT…SYCP, TVIT…KCLP, DIVT…CCPP, GLIT…GIFP, DDIT…GNGI, RGST…GCKP, and DETI…KLLK.

Belongs to the PPR family. P subfamily.

The polypeptide is Pentatricopeptide repeat-containing protein At1g08610 (Arabidopsis thaliana (Mouse-ear cress)).